The primary structure comprises 105 residues: Thiosulfate sulfurtransferase GlpE (105 aa).

In terms of domain architecture, Rhodanese spans 15-103 (MQQGAILVDI…WCRAELPIDT (89 aa)). C63 acts as the Cysteine persulfide intermediate in catalysis.

The protein belongs to the GlpE family.

The protein localises to the cytoplasm. It catalyses the reaction thiosulfate + hydrogen cyanide = thiocyanate + sulfite + 2 H(+). The enzyme catalyses thiosulfate + [thioredoxin]-dithiol = [thioredoxin]-disulfide + hydrogen sulfide + sulfite + 2 H(+). Functionally, transferase that catalyzes the transfer of sulfur from thiosulfate to thiophilic acceptors such as cyanide or dithiols. May function in a CysM-independent thiosulfate assimilation pathway by catalyzing the conversion of thiosulfate to sulfite, which can then be used for L-cysteine biosynthesis. This is Thiosulfate sulfurtransferase GlpE from Haemophilus influenzae (strain ATCC 51907 / DSM 11121 / KW20 / Rd).